A 215-amino-acid polypeptide reads, in one-letter code: Protein GET1 (215 aa).

Residues 1-4 (MPSL) are Lumenal-facing. Residues 5–24 (LILIFTIEVAVELINTIGAA) form a helical membrane-spanning segment. The Cytoplasmic portion of the chain corresponds to 25–110 (TINNLLWRIF…NFDKYITGIR (86 aa)). Positions 72 to 104 (AKWAKLRRQHDKLLEQLEKKKAALDSTKGNFDK) form a coiled coil. The chain crosses the membrane as a helical span at residues 111 to 131 (WVGTQGLRYFLPFWYAKVPMF). Residues 132 to 155 (WLPYGWFPYYAEWLVSFPRAPMGS) lie on the Lumenal side of the membrane. Residues 156–172 (VSIASWQLACTGFVVLI) traverse the membrane as a helical segment. The Cytoplasmic segment spans residues 173–215 (KDAITALVVFVMGMRQSNVKQAVPVKAVSGEKASDEKEGKKEL).

This sequence belongs to the WRB/GET1 family. In terms of assembly, interacts with GET3.

It is found in the endoplasmic reticulum membrane. Required for the post-translational delivery of tail-anchored (TA) proteins to the endoplasmic reticulum. Acts as a membrane receptor for soluble GET3, which recognizes and selectively binds the transmembrane domain of TA proteins in the cytosol. This chain is Protein GET1, found in Pyricularia oryzae (strain 70-15 / ATCC MYA-4617 / FGSC 8958) (Rice blast fungus).